An 859-amino-acid polypeptide reads, in one-letter code: ATP-dependent RNA helicase DDX24 (859 aa).

An N6-acetyllysine modification is found at K17. Position 60 is a phosphoserine (S60). The segment at 61–170 is disordered; it reads PAKNPSSLFS…KGLEPSQSTA (110 aa). Residue K71 is modified to N6-acetyllysine. Residues S82 and S94 each carry the phosphoserine modification. The span at 94–105 shows a compositional bias: basic residues; that stretch reads SPKKKIKLKKSK. Residues 106-115 show a composition bias toward polar residues; sequence NVATEGTSTQ. The segment covering 125–139 has biased composition (acidic residues); the sequence is LEAQGDDMVCDDPEA. The Q motif signature appears at 192–220; that stretch reads SAWKDLFVPRPVLRALSFLGFSAPTPIQA. The Helicase ATP-binding domain occupies 224-528; that stretch reads APAIRDKLDI…RILHKKHTKK (305 aa). An ATP-binding site is contributed by 237-244; that stretch reads AETGSGKT. The interval 262–300 is disordered; that stretch reads NAAPPPSNTEAPPGETRTEAGAETRSPGKAEAESDALPD. Residues 277-293 are compositionally biased toward basic and acidic residues; that stretch reads TRTEAGAETRSPGKAEA. A phosphoserine mark is found at S287 and S295. T302 carries the post-translational modification Phosphothreonine. The disordered stretch occupies residues 326-376; it reads SDQALLFGDDDAGEGPSSLIREKPVPKQNENEEENLDKEQTGNLKQELDDK. A Glycyl lysine isopeptide (Lys-Gly) (interchain with G-Cter in SUMO2) cross-link involves residue K370. Positions 471–474 match the DEAD box motif; sequence DEAD. Residues 578-723 form the Helicase C-terminal domain; sequence YLYYFLMQYP…LFPVQTKYMD (146 aa). Residues K624, K808, and K825 each participate in a glycyl lysine isopeptide (Lys-Gly) (interchain with G-Cter in SUMO2) cross-link. Composition is skewed to polar residues over residues 799-814 and 823-833; these read PLFT…TQSG and PSKSESALSCL. Residues 799-859 are disordered; the sequence is PLFTESQKTK…EQPQPSTSAN (61 aa).

This sequence belongs to the DEAD box helicase family. DDX24/MAK5 subfamily. Interacts with FADD. Interacts with RIPK1; this interaction disrupts RLR signaling activation of IFN-dependent transcription factor IRF7. Interacts with NIP7. Interacts with EP300; this interaction prevents TP53 acetylation mediated by EP300. In terms of assembly, (Microbial infection) Interacts with HIV-1 virus Gag and Rev proteins. Ubiquitinated by MDM2 without targeting DDX24 for proteasomal degradation. Instead, polyubiquitinated DDX24 promotes interaction with NIP7, a component of pre-rRNP processing complex, and associates with pre-rRNA molecules and pre-ribosomal particles. Ubiquitous. Most abundant in heart and brain, but with lowest levels in thymus and small intestine.

Its subcellular location is the cytoplasm. It localises to the nucleus. It catalyses the reaction ATP + H2O = ADP + phosphate + H(+). Its function is as follows. ATP-dependent RNA helicase that plays a role in various aspects of RNA metabolism including pre-mRNA splicing and is thereby involved in different biological processes such as cell cycle regulation or innate immunity. Plays an inhibitory role in TP53 transcriptional activity and subsequently in TP53 controlled cell growth arrest and senescence by inhibiting its EP300 mediated acetylation. Negatively regulates cytosolic RNA-mediated innate immune signaling at least in part by affecting RIPK1/IRF7 interactions. Alternatively, possesses antiviral activity by recognizing gammaherpesvirus transcripts in the context of lytic reactivation. Plays an essential role in cell cycle regulation in vascular smooth muscle cells by interacting with and regulating FANCA (Fanconi anemia complementation group A) mRNA. Functionally, (Microbial infection) Plays a positive role in HIV-1 infection by promoting Rev-dependent nuclear export of viral RNAs and their packaging into virus particles. This is ATP-dependent RNA helicase DDX24 (DDX24) from Homo sapiens (Human).